Here is a 415-residue protein sequence, read N- to C-terminus: Diaminopimelate decarboxylase (415 aa).

The residue at position 54 (lysine 54) is an N6-(pyridoxal phosphate)lysine. Residues glycine 223 and 264–267 (EPGR) each bind pyridoxal 5'-phosphate. Residues arginine 267, arginine 303, and tyrosine 307 each coordinate substrate. Cysteine 338 serves as the catalytic Proton donor. Residues glutamate 339 and tyrosine 374 each contribute to the substrate site. Residue tyrosine 374 participates in pyridoxal 5'-phosphate binding.

Belongs to the Orn/Lys/Arg decarboxylase class-II family. LysA subfamily. As to quaternary structure, homodimer. Requires pyridoxal 5'-phosphate as cofactor.

The enzyme catalyses meso-2,6-diaminopimelate + H(+) = L-lysine + CO2. Its pathway is amino-acid biosynthesis; L-lysine biosynthesis via DAP pathway; L-lysine from DL-2,6-diaminopimelate: step 1/1. Functionally, specifically catalyzes the decarboxylation of meso-diaminopimelate (meso-DAP) to L-lysine. This is Diaminopimelate decarboxylase from Buchnera aphidicola subsp. Acyrthosiphon pisum (strain APS) (Acyrthosiphon pisum symbiotic bacterium).